Consider the following 89-residue polypeptide: UPF0147 protein YN1551_1489 (89 aa).

Belongs to the UPF0147 family.

This Saccharolobus islandicus (strain Y.N.15.51 / Yellowstone #2) (Sulfolobus islandicus) protein is UPF0147 protein YN1551_1489.